Here is a 440-residue protein sequence, read N- to C-terminus: Streptokinase (440 aa).

A signal peptide spans 1 to 26 (MKNYLSFGMFALLFALTFGTVKPVQA). The interval 72 to 94 (PAQGGKTEQGLRPKSKPLATDKG) is disordered.

This protein is not a protease, but it activates plasminogen by complexing with it. As a potential virulence factor, it is thought to prevent the formation of effective fibrin barriers around the site of infection, thereby contributing to the invasiveness of the cells. This chain is Streptokinase (ska), found in Streptococcus pyogenes.